Reading from the N-terminus, the 114-residue chain is Replication initiation control protein YabA (114 aa).

Residues His79, Cys81, Cys95, and Cys98 each contribute to the Zn(2+) site.

It belongs to the YabA family. In terms of assembly, homotetramer. Interacts with both DnaA and DnaN, acting as a bridge between these two proteins. It depends on Zn(2+) as a cofactor.

The protein localises to the cytoplasm. It is found in the nucleoid. In terms of biological role, involved in control of chromosome replication initiation. Inhibits the cooperative binding of DnaA to the oriC region, thus negatively regulating initiation of chromosome replication. Inhibits the ability of DnaA-ATP to form a helix on DNA; does not disassemble preformed DnaA-DNA helices. Decreases the residence time of DnaA on the chromosome at its binding sites (oriC, replication forks and promoter-binding sites). Tethers DnaA to the replication machinery via the DNA polymerase beta sliding clamp subunit (dnaN). Associates with oriC and other DnaA targets on the chromosome in a DnaA-dependent manner. This Lactobacillus gasseri (strain ATCC 33323 / DSM 20243 / BCRC 14619 / CIP 102991 / JCM 1131 / KCTC 3163 / NCIMB 11718 / NCTC 13722 / AM63) protein is Replication initiation control protein YabA.